The chain runs to 163 residues: Probable metallophosphoesterase MG207 (163 aa).

Mn(2+) is bound by residues Asp9, His11, Asp34, Asn53, His75, His107, and His109.

The protein belongs to the metallophosphoesterase superfamily. YfcE family. Mn(2+) serves as cofactor.

This Mycoplasma genitalium (strain ATCC 33530 / DSM 19775 / NCTC 10195 / G37) (Mycoplasmoides genitalium) protein is Probable metallophosphoesterase MG207.